A 274-amino-acid chain; its full sequence is Imidazole glycerol phosphate synthase subunit HisF (274 aa).

Active-site residues include Asp-11 and Asp-134.

It belongs to the HisA/HisF family. Heterodimer of HisH and HisF.

The protein localises to the cytoplasm. It catalyses the reaction 5-[(5-phospho-1-deoxy-D-ribulos-1-ylimino)methylamino]-1-(5-phospho-beta-D-ribosyl)imidazole-4-carboxamide + L-glutamine = D-erythro-1-(imidazol-4-yl)glycerol 3-phosphate + 5-amino-1-(5-phospho-beta-D-ribosyl)imidazole-4-carboxamide + L-glutamate + H(+). Its pathway is amino-acid biosynthesis; L-histidine biosynthesis; L-histidine from 5-phospho-alpha-D-ribose 1-diphosphate: step 5/9. IGPS catalyzes the conversion of PRFAR and glutamine to IGP, AICAR and glutamate. The HisF subunit catalyzes the cyclization activity that produces IGP and AICAR from PRFAR using the ammonia provided by the HisH subunit. This Methanobrevibacter smithii (strain ATCC 35061 / DSM 861 / OCM 144 / PS) protein is Imidazole glycerol phosphate synthase subunit HisF.